A 310-amino-acid chain; its full sequence is Probable metallo-hydrolase Mb2322c (310 aa).

The disordered stretch occupies residues 1–29; sequence MVATRGRPCPTNFSRPQRPRVAGNGTKSQ. Zn(2+)-binding residues include His-137, Asp-139, Asp-141, His-142, His-221, Asp-242, and His-288.

The protein belongs to the metallo-beta-lactamase superfamily. Zn(2+) serves as cofactor.

The protein is Probable metallo-hydrolase Mb2322c of Mycobacterium bovis (strain ATCC BAA-935 / AF2122/97).